The primary structure comprises 503 residues: Aromatase 2 (503 aa).

Cysteine 437 contacts heme.

This sequence belongs to the cytochrome P450 family. Requires heme as cofactor.

It is found in the membrane. The enzyme catalyses testosterone + 3 reduced [NADPH--hemoprotein reductase] + 3 O2 = 17beta-estradiol + formate + 3 oxidized [NADPH--hemoprotein reductase] + 4 H2O + 4 H(+). The catalysed reaction is androst-4-ene-3,17-dione + 3 reduced [NADPH--hemoprotein reductase] + 3 O2 = estrone + formate + 3 oxidized [NADPH--hemoprotein reductase] + 4 H2O + 4 H(+). In terms of biological role, catalyzes the formation of aromatic C18 estrogens from C19 androgens. The chain is Aromatase 2 (CYP19A2) from Sus scrofa (Pig).